The sequence spans 474 residues: GTPase Der (474 aa).

EngA-type G domains are found at residues 2–166 (LRIA…NVPE) and 212–385 (LKIA…TTVS). GTP is bound by residues 8 to 15 (GRPNVGKS), 55 to 59 (DTGGV), 118 to 121 (NKAD), 218 to 225 (GRPNVGKS), 265 to 269 (DTAGL), and 330 to 333 (NKWD). A KH-like domain is found at 386-470 (SKVPTPVVNK…PFDLEFKEKT (85 aa)).

Belongs to the TRAFAC class TrmE-Era-EngA-EngB-Septin-like GTPase superfamily. EngA (Der) GTPase family. Associates with the 50S ribosomal subunit.

GTPase that plays an essential role in the late steps of ribosome biogenesis. The protein is GTPase Der of Chlamydia abortus (strain DSM 27085 / S26/3) (Chlamydophila abortus).